The sequence spans 631 residues: Probable methyltransferase PMT16 (631 aa).

The Cytoplasmic portion of the chain corresponds to 1 to 14; it reads MNLFTRISSRTKKA. Residues 15–35 traverse the membrane as a helical; Signal-anchor for type II membrane protein segment; that stretch reads NLYYVTLVALLCIASYLLGIW. Over 36-631 the chain is Lumenal; the sequence is QNTAVNPRAA…EDKNNTSALS (596 aa). N-linked (GlcNAc...) asparagine glycans are attached at residues Asn-61, Asn-230, and Asn-626.

The protein belongs to the methyltransferase superfamily.

The protein resides in the endoplasmic reticulum membrane. This is Probable methyltransferase PMT16 from Arabidopsis thaliana (Mouse-ear cress).